A 503-amino-acid chain; its full sequence is Transcriptional regulator LovE (503 aa).

Residues 1–14 are compositionally biased toward polar residues; sequence MAADQGTFTTSVTL. Residues 1 to 21 form a disordered region; the sequence is MAADQGTFTTSVTLSPVEGSR. A DNA-binding region (zn(2)-C6 fungal-type) is located at residues 35 to 67; the sequence is CDRCHAQKIKCTGNKEVTARAPCQRCQQAGLRC. 2 disordered regions span residues 89–124 and 331–362; these read ADPD…RQFL and SHMN…DTIP. Positions 339–349 are enriched in basic and acidic residues; sequence SRSESPSRDDT. A compositionally biased stretch (polar residues) spans 350 to 359; it reads SSTSGHSSVD.

The protein localises to the nucleus. Its function is as follows. Transcription factor that regulates the expression of the he gene cluster that mediates the biosynthesis of lovastatin (also known as mevinolin, mevacor or monacolin K), a hypolipidemic inhibitor of (3S)-hydroxymethylglutaryl-coenzyme A (HMG-CoA) reductase (HMGR). The chain is Transcriptional regulator LovE from Aspergillus terreus (strain NIH 2624 / FGSC A1156).